Reading from the N-terminus, the 543-residue chain is Formin-binding protein 1-like (543 aa).

The region spanning 1-263 (MSWGTELWDQ…AAKSVDERRD (263 aa)) is the F-BAR domain. 2 coiled-coil regions span residues 66–258 (FTSC…AKSV) and 334–426 (LEDF…QRSE). Residues 339–416 (HLPPEQRRKR…IHKNEGWLSE (78 aa)) form the REM-1 domain. The interval 424 to 467 (RSERRHSAEANHLVAQGRESPEGSYTEDANQEGRVQPQHHAHPE) is disordered. Residues 479–540 (PAIGHCKSLY…PTSYIEITLE (62 aa)) enclose the SH3 domain.

It belongs to the FNBP1 family. Homodimerizes, the dimers can polymerize end-to-end to form filamentous structures. Interacts with GTP-bound cdc42 and wasl/n-wasp.

It localises to the cytoplasm. Its subcellular location is the cytoskeleton. The protein localises to the cell cortex. It is found in the cytoplasmic vesicle. The protein resides in the cell membrane. In terms of biological role, required to coordinate membrane tubulation with reorganization of the actin cytoskeleton during endocytosis. Essential for autophagy of intracellular bacterial pathogens. Promotes cdc42-induced actin polymerization by activating the wasl-waspip complex, the predominant form of wasl/n-wasp in cells. This is Formin-binding protein 1-like (fnbp1l) from Xenopus laevis (African clawed frog).